The primary structure comprises 127 residues: RxLR effector protein CRE6 (127 aa).

The signal sequence occupies residues 1–19 (MIRNALLVLVFVLIGTISA). Positions 48 to 67 (RLLRQGSVKEGGVHDATEER) match the RxLR-dEER motif.

Belongs to the RxLR effector family.

The protein localises to the secreted. Its subcellular location is the host cell. In terms of biological role, effector that is involved in host plant infection. Contributes to virulence during the early infection stage, by inhibiting plant defense responses induced by both PAMP-triggered immunity (PTI) and effector-triggered immunity (ETI). In Phytophthora infestans (strain T30-4) (Potato late blight agent), this protein is RxLR effector protein CRE6.